The primary structure comprises 225 residues: Membrane protein (225 aa).

Residues 1–20 are Virion surface-facing; it reads MSNETNCTLDFEQSVELFKE. Residues 21–41 traverse the membrane as a helical segment; that stretch reads YNLFITAFLLFLTIILQYGYA. Residues 42–51 are Intravirion-facing; sequence TRSKFIYILK. The chain crosses the membrane as a helical span at residues 52 to 72; that stretch reads MIVLWCFWPLNIAVGVISCIY. At 73–77 the chain is on the virion surface side; that stretch reads PPNTG. A helical membrane pass occupies residues 78–98; sequence GLVAAIILTVFACLSFVGYWI. Over 99–225 the chain is Intravirion; it reads QSIRLFKRCR…VATGGSSLYT (127 aa).

Belongs to the gammacoronaviruses M protein family. In terms of assembly, homomultimer. Interacts with envelope E protein in the budding compartment of the host cell, which is located between endoplasmic reticulum and the Golgi complex. Forms a complex with HE and S proteins. Interacts with nucleocapsid N protein. This interaction probably participates in RNA packaging into the virus.

Its subcellular location is the virion membrane. The protein localises to the host Golgi apparatus membrane. Its function is as follows. Component of the viral envelope that plays a central role in virus morphogenesis and assembly via its interactions with other viral proteins. This is Membrane protein from Gallus gallus (Chicken).